Here is a 341-residue protein sequence, read N- to C-terminus: Inner membrane ABC transporter permease protein YejE (341 aa).

Residues 1 to 21 (MSRLSPVNQARWARFRHNRRG) lie on the Cytoplasmic side of the membrane. The chain crosses the membrane as a helical span at residues 22 to 42 (YWSLWIFLVLFGLSLCSELIA). Topologically, residues 43-143 (NDKPLLVRYD…ARILYGTRIS (101 aa)) are periplasmic. The region spanning 140 to 332 (TRISVLFGLM…LLIFIGEAVR (193 aa)) is the ABC transmembrane type-1 domain. The chain crosses the membrane as a helical span at residues 144-164 (VLFGLMLTLCSSVMGVLAGAL). Residues 165-178 (QGYYGGKVDLWGQR) lie on the Cytoplasmic side of the membrane. A helical transmembrane segment spans residues 179-199 (FIEVWSGMPTLFLIILLSSVV). The Periplasmic portion of the chain corresponds to 200-201 (QP). Residues 202 to 222 (NFWWLLAITVLFGWMSLVGVV) form a helical membrane-spanning segment. At 223 to 252 (RAEFLRTRNFDYIRAAQALGVSDRSIILRH) the chain is on the cytoplasmic side. Residues 253-273 (MLPNAMVATLTFLPFILCSSI) form a helical membrane-spanning segment. At 274–307 (TTLTSLDFLGFGLPLGSPSLGELLLQGKNNLQAP) the chain is on the periplasmic side. A helical membrane pass occupies residues 308–328 (WLGITAFLSVAILLSLLIFIG). At 329–341 (EAVRDAFDPNKAV) the chain is on the cytoplasmic side.

This sequence belongs to the binding-protein-dependent transport system permease family. OppBC subfamily.

The protein resides in the cell inner membrane. Its function is as follows. Probably part of a binding-protein-dependent transport system. Probably responsible for the translocation of the substrate across the membrane. The polypeptide is Inner membrane ABC transporter permease protein YejE (yejE) (Escherichia coli (strain K12)).